We begin with the raw amino-acid sequence, 603 residues long: Arginine--tRNA ligase (603 aa).

A 'HIGH' region motif is present at residues 143–153; sequence PNIAKEMHVGH.

The protein belongs to the class-I aminoacyl-tRNA synthetase family. Monomer.

Its subcellular location is the cytoplasm. It catalyses the reaction tRNA(Arg) + L-arginine + ATP = L-arginyl-tRNA(Arg) + AMP + diphosphate. The chain is Arginine--tRNA ligase from Prochlorococcus marinus (strain MIT 9303).